The primary structure comprises 210 residues: ATP-dependent Clp protease proteolytic subunit (210 aa).

The active-site Nucleophile is Ser-106. Residue His-131 is part of the active site.

It belongs to the peptidase S14 family. As to quaternary structure, fourteen ClpP subunits assemble into 2 heptameric rings which stack back to back to give a disk-like structure with a central cavity, resembling the structure of eukaryotic proteasomes.

Its subcellular location is the cytoplasm. It carries out the reaction Hydrolysis of proteins to small peptides in the presence of ATP and magnesium. alpha-casein is the usual test substrate. In the absence of ATP, only oligopeptides shorter than five residues are hydrolyzed (such as succinyl-Leu-Tyr-|-NHMec, and Leu-Tyr-Leu-|-Tyr-Trp, in which cleavage of the -Tyr-|-Leu- and -Tyr-|-Trp bonds also occurs).. Functionally, cleaves peptides in various proteins in a process that requires ATP hydrolysis. Has a chymotrypsin-like activity. Plays a major role in the degradation of misfolded proteins. The sequence is that of ATP-dependent Clp protease proteolytic subunit from Rhodopseudomonas palustris (strain BisB18).